Here is a 314-residue protein sequence, read N- to C-terminus: Diisopropyl-fluorophosphatase (314 aa).

Ca(2+) is bound by residues E21, N120, N175, D229, D232, L273, and H274. The active-site Proton acceptor is the H287.

In terms of assembly, monomer. Requires Ca(2+) as cofactor.

It carries out the reaction diisopropyl fluorophosphate + H2O = diisopropyl phosphate + fluoride + 2 H(+). Inhibited by chelating agents. In terms of biological role, biological function and substrate unknown. However, it is capable of acting on phosphorus anhydride bonds (such as phosphorus-halide and phosphorus-cyanide) in organophosphorus compounds (including nerve gases). The polypeptide is Diisopropyl-fluorophosphatase (Loligo vulgaris (Common European squid)).